Consider the following 1025-residue polypeptide: Multidrug resistance protein MdtC (1025 aa).

The next 12 membrane-spanning stretches (helical) occupy residues 3 to 23 (FFALFIYRPVATILLSVAITL), 333 to 353 (EVEQTLIISVALVILVVFLFL), 360 to 380 (IIPAVAVPVSLIGTFAAMYLC), 387 to 407 (LSLMALTIATGFVVDDAIVVL), 431 to 451 (VGFTVLSMSLSLVAVFLPLLL), 463 to 483 (FAVTLSVAIGISLLVSLTLTP), 528 to 548 (LVGVVLLGTIALNIWLYISIP), 853 to 873 (VILIIAAIATVYIVLGILYES), 875 to 895 (VHPLTILSTLPSAGVGALLAL), 897 to 917 (LFNAPFSLIALIGIMLLIGIV), 953 to 973 (PIMMTTLAALFGALPLVLSGG), and 984 to 1004 (ITIVGGLVMSQLLTLYTTPVV).

The protein belongs to the resistance-nodulation-cell division (RND) (TC 2.A.6) family. MdtC subfamily. In terms of assembly, part of a tripartite efflux system composed of MdtA, MdtB and MdtC. MdtC forms a heteromultimer with MdtB.

Its subcellular location is the cell inner membrane. Its function is as follows. The MdtABC tripartite complex confers resistance against novobiocin and deoxycholate. The protein is Multidrug resistance protein MdtC of Escherichia coli (strain SMS-3-5 / SECEC).